Here is a 309-residue protein sequence, read N- to C-terminus: Glutaminase (309 aa).

Residues serine 64, asparagine 114, glutamate 160, asparagine 167, tyrosine 191, tyrosine 243, and valine 261 each coordinate substrate.

It belongs to the glutaminase family. Homotetramer.

The catalysed reaction is L-glutamine + H2O = L-glutamate + NH4(+). This Methylobacterium sp. (strain 4-46) protein is Glutaminase.